Here is a 64-residue protein sequence, read N- to C-terminus: Large ribosomal subunit protein uL29 (64 aa).

Belongs to the universal ribosomal protein uL29 family.

The protein is Large ribosomal subunit protein uL29 of Acaryochloris marina (strain MBIC 11017).